Here is a 763-residue protein sequence, read N- to C-terminus: Phosphoglycerol transferase I (763 aa).

4 helical membrane-spanning segments follow: residues 1–21 (MSELLSFALFLASVLIYAWKA), 26–46 (WWFAATLTVLGLFVVLNITLF), 77–97 (ILPGIGIVLGLTAVFGALGWI), and 108–128 (FGYSLLALLLALGSVDASPAF).

This sequence belongs to the OpgB family.

The protein localises to the cell inner membrane. It carries out the reaction a phosphatidylglycerol + a membrane-derived-oligosaccharide D-glucose = a 1,2-diacyl-sn-glycerol + a membrane-derived-oligosaccharide 6-(glycerophospho)-D-glucose.. Its pathway is glycan metabolism; osmoregulated periplasmic glucan (OPG) biosynthesis. Its function is as follows. Transfers a phosphoglycerol residue from phosphatidylglycerol to the membrane-bound nascent glucan backbones. In Escherichia coli (strain SMS-3-5 / SECEC), this protein is Phosphoglycerol transferase I.